The following is a 37-amino-acid chain: Large ribosomal subunit protein bL36 (37 aa).

The protein belongs to the bacterial ribosomal protein bL36 family.

This is Large ribosomal subunit protein bL36 from Acidothermus cellulolyticus (strain ATCC 43068 / DSM 8971 / 11B).